The chain runs to 65 residues: MTTNLDSTQLEKLTDTDINDTVLKLKKELFELRLQKATRQEIKPHLFKQKKKLIAKLLTIKSKKS.

This sequence belongs to the universal ribosomal protein uL29 family.

The protein localises to the plastid. The protein resides in the chloroplast. The protein is Large ribosomal subunit protein uL29c (rpl29) of Guillardia theta (Cryptophyte).